A 163-amino-acid polypeptide reads, in one-letter code: Jun dimerization protein 2 (163 aa).

Disordered stretches follow at residues 1-20 and 59-89; these read MMPG…PGLG and KRPQ…AARC. Residue Lys-65 forms a Glycyl lysine isopeptide (Lys-Gly) (interchain with G-Cter in SUMO2) linkage. The bZIP domain maps to 72 to 135; sequence EERRKRRREK…QQLILMLNRH (64 aa). The basic motif stretch occupies residues 74-96; sequence RRKRRREKNKVAAARCRNKKKER. The segment at 100 to 128 is leucine-zipper; it reads LQRESERLELMNAELKTQIEELKLERQQL. Thr-148 is modified (phosphothreonine; by MAPK8).

It belongs to the bZIP family. ATF subfamily. In terms of assembly, forms a homodimer or heterodimer with JUN, JUNB, JUND, CEBPG and ATF2 thereby inhibiting transactivation by JUN, ATF2 and CEBPG. Binds multiple DNA elements such as cAMP-response element (CRE) and TPA response element (TRE) either as homodimer or heterodimer. Interacts with IRF2BP1. In terms of processing, phosphorylation of Thr-148 by MAPK8 in response to different stress conditions such as, UV irradiation, oxidatives stress and anisomycin treatments. Polyubiquitinated; probably by IRF2BP1. In terms of tissue distribution, ubiquitously expressed in all adult tissues tested as well in embryos.

The protein localises to the nucleus. Functionally, component of the AP-1 transcription factor that represses transactivation mediated by the Jun family of proteins. Involved in a variety of transcriptional responses associated with AP-1, such as UV-induced apoptosis, cell differentiation, tumorigenesis and antitumogeneris. Can also function as a repressor by recruiting histone deacetylase 3/HDAC3 to the promoter region of JUN. May control transcription via direct regulation of the modification of histones and the assembly of chromatin. This Mus musculus (Mouse) protein is Jun dimerization protein 2 (Jdp2).